The chain runs to 160 residues: DNA topoisomerase small subunit (160 aa).

In terms of assembly, part of the DNA topoisomerase complex made of gp39, gp52 and gp60. Mg(2+) is required as a cofactor.

The enzyme catalyses ATP-dependent breakage, passage and rejoining of double-stranded DNA.. Functionally, small subunit of the DNA topoisomerase that untwists superhelical DNA. Controls topological states of double-stranded DNA by transient breakage and subsequent rejoining of DNA strands. The chain is DNA topoisomerase small subunit (60) from Enterobacteria phage T4 (Bacteriophage T4).